The primary structure comprises 778 residues: 5-methyltetrahydropteroyltriglutamate--homocysteine methyltransferase (778 aa).

Residues 17-20 (RELK) and lysine 118 each bind 5-methyltetrahydropteroyltri-L-glutamate. L-homocysteine contacts are provided by residues 436 to 438 (IGS) and glutamate 489. Residues 436-438 (IGS) and glutamate 489 contribute to the L-methionine site. 5-methyltetrahydropteroyltri-L-glutamate contacts are provided by residues 520 to 521 (RC) and tryptophan 566. Aspartate 604 is a binding site for L-homocysteine. Residue aspartate 604 coordinates L-methionine. Glutamate 610 provides a ligand contact to 5-methyltetrahydropteroyltri-L-glutamate. The Zn(2+) site is built by histidine 646, cysteine 648, and glutamate 670. Histidine 699 acts as the Proton donor in catalysis. Cysteine 731 contributes to the Zn(2+) binding site.

This sequence belongs to the vitamin-B12 independent methionine synthase family. Zn(2+) is required as a cofactor.

The catalysed reaction is 5-methyltetrahydropteroyltri-L-glutamate + L-homocysteine = tetrahydropteroyltri-L-glutamate + L-methionine. It functions in the pathway amino-acid biosynthesis; L-methionine biosynthesis via de novo pathway; L-methionine from L-homocysteine (MetE route): step 1/1. In terms of biological role, catalyzes the transfer of a methyl group from 5-methyltetrahydrofolate to homocysteine resulting in methionine formation. This chain is 5-methyltetrahydropteroyltriglutamate--homocysteine methyltransferase, found in Vibrio vulnificus (strain CMCP6).